The primary structure comprises 323 residues: Thymidylate synthase (323 aa).

DUMP contacts are provided by residues Arg21 and 172–173 (RR). Cys192 acts as the Nucleophile in catalysis. DUMP is bound by residues 214–217 (RSND), Asn225, and 255–257 (HVY). Residue Asp217 coordinates (6R)-5,10-methylene-5,6,7,8-tetrahydrofolate. Ala322 contacts (6R)-5,10-methylene-5,6,7,8-tetrahydrofolate.

It belongs to the thymidylate synthase family. Bacterial-type ThyA subfamily. In terms of assembly, homodimer.

The protein localises to the cytoplasm. It carries out the reaction dUMP + (6R)-5,10-methylene-5,6,7,8-tetrahydrofolate = 7,8-dihydrofolate + dTMP. The protein operates within pyrimidine metabolism; dTTP biosynthesis. Its function is as follows. Catalyzes the reductive methylation of 2'-deoxyuridine-5'-monophosphate (dUMP) to 2'-deoxythymidine-5'-monophosphate (dTMP) while utilizing 5,10-methylenetetrahydrofolate (mTHF) as the methyl donor and reductant in the reaction, yielding dihydrofolate (DHF) as a by-product. This enzymatic reaction provides an intracellular de novo source of dTMP, an essential precursor for DNA biosynthesis. This Pseudomonas putida (strain ATCC 47054 / DSM 6125 / CFBP 8728 / NCIMB 11950 / KT2440) protein is Thymidylate synthase.